The chain runs to 174 residues: UPF0336 protein MAP_3996c (174 aa).

Positions 11-131 constitute a MaoC-like domain; that stretch reads IGSHYRAPDY…VLAEIRSEVT (121 aa).

Belongs to the UPF0336 family.

The protein is UPF0336 protein MAP_3996c of Mycolicibacterium paratuberculosis (strain ATCC BAA-968 / K-10) (Mycobacterium paratuberculosis).